The primary structure comprises 174 residues: Cytochrome c-type biogenesis protein CcmE (174 aa).

Residues 1-8 (MNPRRKSR) lie on the Cytoplasmic side of the membrane. A helical; Signal-anchor for type II membrane protein transmembrane segment spans residues 9–29 (LSVVLFIFLGISVASALVLYA). The Periplasmic segment spans residues 30 to 174 (LRQNIDLFYT…QEKQFKEGNQ (145 aa)). Positions 131 and 135 each coordinate heme. The disordered stretch occupies residues 149–174 (KPMGISDLKNESDRDRQEKQFKEGNQ). Residues 156–174 (LKNESDRDRQEKQFKEGNQ) are compositionally biased toward basic and acidic residues.

The protein belongs to the CcmE/CycJ family.

The protein resides in the cell inner membrane. In terms of biological role, heme chaperone required for the biogenesis of c-type cytochromes. Transiently binds heme delivered by CcmC and transfers the heme to apo-cytochromes in a process facilitated by CcmF and CcmH. This chain is Cytochrome c-type biogenesis protein CcmE, found in Histophilus somni (strain 129Pt) (Haemophilus somnus).